A 524-amino-acid polypeptide reads, in one-letter code: Maturase K (524 aa).

The protein belongs to the intron maturase 2 family. MatK subfamily.

The protein resides in the plastid. Its subcellular location is the chloroplast. In terms of biological role, usually encoded in the trnK tRNA gene intron. Probably assists in splicing its own and other chloroplast group II introns. This Welwitschia mirabilis (Tree tumbo) protein is Maturase K.